Consider the following 1972-residue polypeptide: MAQKGQLSDDEKFLFVDKNFINSPVAQADWAAKRLVWVPSEKQGFEAASIKEEKGDEVVVELVENGKKVTVGKDDIQKMNPPKFSKVEDMAELTCLNEASVLHNLRERYFSGLIYTYSGLFCVVVNPYKHLPIYSEKIVDMYKGKKRHEMPPHIYAIADTAYRSMLQDREDQSILCTGESGAGKTENTKKVIQYLAVVASSHKGKKDTSITGELEKQLLQANPILEAFGNAKTVKNDNSSRFGKFIRINFDVTGYIVGANIETYLLEKSRAIRQARDERTFHIFYYMIAGAKEKMRSDLLLEGFNNYTFLSNGFVPIPAAQDDEMFQETVEAMAIMGFSEEEQLSILKVVSSVLQLGNIVFKKERNTDQASMPDNTAAQKVCHLMGINVTDFTRSILTPRIKVGRDVVQKAQTKEQADFAVEALAKATYERLFRWILTRVNKALDKTHRQGASFLGILDIAGFEIFEVNSFEQLCINYTNEKLQQLFNHTMFILEQEEYQREGIEWNFIDFGLDLQPCIELIERPNNPPGVLALLDEECWFPKATDKSFVEKLCTEQGSHPKFQKPKQLKDKTEFSIIHYAGKVDYNASAWLTKNMDPLNDNVTSLLNASSDKFVADLWKDVDRIVGLDQMAKMTESSLPSASKTKKGMFRTVGQLYKEQLGKLMTTLRNTTPNFVRCIIPNHEKRSGKLDAFLVLEQLRCNGVLEGIRICRQGFPNRIVFQEFRQRYEILAANAIPKGFMDGKQACILMIKALELDPNLYRIGQSKIFFRTGVLAHLEEERDLKITDVIMAFQAMCRGYLARKAFAKRQQQLTAMKVIQRNCAAYLKLRNWQWWRLFTKVKPLLQVTRQEEEMQAKEDELQKTKERQQKAENELKELEQKHSQLTEEKNLLQEQLQAETELYAEAEEMRVRLAAKKQELEEILHEMEARLEEEEDRGQQLQAERKKMAQQMLDLEEQLEEEEAARQKLQLEKVTAEAKIKKLEDEILVMDDQNNKLSKERKLLEERISDLTTNLAEEEEKAKNLTKLKNKHESMISELEVRLKKEEKSRQELEKLKRKLEGDASDFHEQIADLQAQIAELKMQLAKKEEELQAALARLDDEIAQKNNALKKIRELEGHISDLQEDLDSERAARNKAEKQKRDLGEELEALKTELEDTLDSTATQQELRAKREQEVTVLKKALDEETRSHEAQVQEMRQKHAQAVEELTEQLEQFKRAKANLDKNKQTLEKENADLAGELRVLGQAKQEVEHKKKKLEAQVQELQSKCSDGERARAELNDKVHKLQNEVESVTGMLNEAEGKAIKLAKDVASLSSQLQDTQELLQEETRQKLNVSTKLRQLEEERNSLQDQLDEEMEAKQNLERHISTLNIQLSDSKKKLQDFASTVEALEEGKKRFQKEIENLTQQYEEKAAAYDKLEKTKNRLQQELDDLVVDLDNQRQLVSNLEKKQRKFDQLLAEEKNISSKYADERDRAEAEAREKETKALSLARALEEALEAKEELERTNKMLKAEMEDLVSSKDDVGKNVHELEKSKRALETQMEEMKTQLEELEDELQATEDAKLRLEVNMQALKGQFERDLQARDEQNEEKRRQLQRQLHEYETELEDERKQRALAAAAKKKLEGDLKDLELQADSAIKGREEAIKQLRKLQAQMKDFQRELEDARASRDEIFATAKENEKKAKSLEADLMQLQEDLAAAERARKQADLEKEELAEELASSLSGRNALQDEKRRLEARIAQLEEELEEEQGNMEAMSDRVRKATQQAEQLSNELATERSTAQKNESARQQLERQNKELRSKLHEMEGAVKSKFKSTIAALEAKIAQLEEQVEQEAREKQAATKSLKQKDKKLKEILLQVEDERKMAEQYKEQAEKGNARVKQLKRQLEEAEEESQRINANRRKLQRELDEATESNEAMGREVNALKSKLRRGNETSFVPSRRSGGRRVIENADGSEEETDTRDADFNGTKASE.

S8, S23, and S40 each carry phosphoserine. The Myosin N-terminal SH3-like domain maps to 31-81; that stretch reads AAKRLVWVPSEKQGFEAASIKEEKGDEVVVELVENGKKVTVGKDDIQKMNP. Residues 85–783 form the Myosin motor domain; the sequence is SKVEDMAELT…VLAHLEEERD (699 aa). Residue K129 is modified to N6,N6,N6-trimethyllysine. Residue 178–185 participates in ATP binding; that stretch reads GESGAGKT. 2 actin-binding regions span residues 661 to 683 and 762 to 776; these read LGKLMTTLRNTTPNFVRCIIPNH and RIGQSKIFFRTGVLA. Residues 786-815 form the IQ domain; that stretch reads ITDVIMAFQAMCRGYLARKAFAKRQQQLTA. Positions 844–1934 form a coiled coil; that stretch reads LLQVTRQEEE…KSKLRRGNET (1091 aa). The disordered stretch occupies residues 858-882; the sequence is EDELQKTKERQQKAENELKELEQKH. At T1177 the chain carries Phosphothreonine. S1684 and S1722 each carry phosphoserine. 2 disordered regions span residues 1744-1800 and 1866-1972; these read ELEE…LRSK and EQYK…KASE. The segment covering 1762–1788 has biased composition (polar residues); that stretch reads ATQQAEQLSNELATERSTAQKNESARQ. Composition is skewed to basic and acidic residues over residues 1789–1800 and 1866–1876; these read QLERQNKELRSK and EQYKEQAEKGN. Residues 1935-1972 are C-terminal; sequence SFVPSRRSGGRRVIENADGSEEETDTRDADFNGTKASE. S1954 carries the phosphoserine modification. Phosphothreonine is present on T1958. At S1971 the chain carries Phosphoserine.

Belongs to the TRAFAC class myosin-kinesin ATPase superfamily. Myosin family. Muscle myosin is a hexameric protein that consists of 2 heavy chain subunits (MHC), 2 alkali light chain subunits (MLC) and 2 regulatory light chain subunits (MLC-2). Smooth muscle; expressed in the umbilical artery, bladder, esophagus and trachea. Isoform 1 is mostly found in slowly contracting tonic muscles.

Its subcellular location is the melanosome. Muscle contraction. In Homo sapiens (Human), this protein is Myosin-11 (MYH11).